The primary structure comprises 367 residues: 3-isopropylmalate dehydrogenase (367 aa).

An NAD(+)-binding site is contributed by 77-90 (GPKYDDLDFSVKPE). The substrate site is built by R97, R107, R135, and D224. Mg(2+) is bound by residues D224, D248, and D252. 287–299 (GSAPDIAGQGKAN) is an NAD(+) binding site.

The protein belongs to the isocitrate and isopropylmalate dehydrogenases family. LeuB type 1 subfamily. In terms of assembly, homodimer. The cofactor is Mg(2+). Mn(2+) serves as cofactor.

The protein localises to the cytoplasm. It catalyses the reaction (2R,3S)-3-isopropylmalate + NAD(+) = 4-methyl-2-oxopentanoate + CO2 + NADH. The protein operates within amino-acid biosynthesis; L-leucine biosynthesis; L-leucine from 3-methyl-2-oxobutanoate: step 3/4. In terms of biological role, catalyzes the oxidation of 3-carboxy-2-hydroxy-4-methylpentanoate (3-isopropylmalate) to 3-carboxy-4-methyl-2-oxopentanoate. The product decarboxylates to 4-methyl-2 oxopentanoate. This is 3-isopropylmalate dehydrogenase from Ruegeria pomeroyi (strain ATCC 700808 / DSM 15171 / DSS-3) (Silicibacter pomeroyi).